The following is a 366-amino-acid chain: Homeobox-leucine zipper protein HOX21 (366 aa).

Disordered stretches follow at residues 25–81 and 94–132; these read QQAA…SSAQ and MLGKRPMSYGDGGGGGDEVNGGGEDELSDDGSQAGEKKR. Positions 36 to 48 are enriched in basic residues; sequence HHHHHHHGHHGHH. The span at 62-74 shows a compositional bias: pro residues; the sequence is GPPPPPPPHPHNP. Residues 103 to 115 are compositionally biased toward gly residues; sequence GDGGGGGDEVNGG. Positions 127-186 form a DNA-binding region, homeobox; the sequence is AGEKKRRLNVEQVRTLEKNFELGNKLEPERKMQLARALGLQPRQVAIWFQNRRARWKTKQ. The leucine-zipper stretch occupies residues 185 to 229; the sequence is KQLEKDYDALKRQLDAVKAENDALLNHNKKLQAEIVALKGREAAS. Disordered stretches follow at residues 239–287 and 312–336; these read EASC…GGGG and LHSSSGGAGGPKMEHHGGGGNVQAA. Positions 240–252 are enriched in polar residues; the sequence is ASCSNRSENSSEI.

It belongs to the HD-ZIP homeobox family. Class I subfamily. As to expression, expressed in seedlings, roots, stems, leaf blades and panicles.

Its subcellular location is the nucleus. Its function is as follows. Probable transcription factor. This Oryza sativa subsp. japonica (Rice) protein is Homeobox-leucine zipper protein HOX21 (HOX21).